The following is a 150-amino-acid chain: 3-dehydroquinate dehydratase (150 aa).

The active-site Proton acceptor is tyrosine 26. 3 residues coordinate substrate: asparagine 77, histidine 83, and aspartate 90. Histidine 103 functions as the Proton donor in the catalytic mechanism. Residues leucine 104–serine 105 and arginine 114 contribute to the substrate site.

The protein belongs to the type-II 3-dehydroquinase family. As to quaternary structure, homododecamer.

It carries out the reaction 3-dehydroquinate = 3-dehydroshikimate + H2O. It participates in metabolic intermediate biosynthesis; chorismate biosynthesis; chorismate from D-erythrose 4-phosphate and phosphoenolpyruvate: step 3/7. In terms of biological role, catalyzes a trans-dehydration via an enolate intermediate. In Pectobacterium atrosepticum (strain SCRI 1043 / ATCC BAA-672) (Erwinia carotovora subsp. atroseptica), this protein is 3-dehydroquinate dehydratase.